The sequence spans 569 residues: Estrogen receptor (569 aa).

Residues 1 to 151 (MYPKEEHSAG…GFDSGKETRF (151 aa)) are modulating. Residues 28 to 37 (PTQTFGTSSP) show a composition bias toward polar residues. The disordered stretch occupies residues 28 to 65 (PTQTFGTSSPAEPASVGYYPAPPDPHEEHLQTLGGGSS). 2 consecutive NR C4-type zinc fingers follow at residues 152–172 (CAVC…CEGC) and 188–212 (CPAT…LRKC). Positions 152–217 (CAVCSDYASG…RLRKCYEVGM (66 aa)) form a DNA-binding region, nuclear receptor. Positions 218-278 (MKGGIRKDRG…SGGVVSTLCM (61 aa)) are hinge. Residues 223–271 (RKDRGGRSVRRERRRSSNEDRDKSSSDQCSRAGVRTTGPQDKRKKRSGG) are disordered. Residues 237 to 247 (RSSNEDRDKSS) are compositionally biased toward basic and acidic residues. In terms of domain architecture, NR LBD spans 279–515 (SPDQVLLLLL…DLLLEMLDAQ (237 aa)). The segment covering 523-532 (VQRVWSQSEK) has biased composition (polar residues). The interval 523–569 (VQRVWSQSEKNPPSTPTTSSSSSNNSPRGGAAAIQSNGACHSHSPDP) is disordered. Residues 538–549 (PTTSSSSSNNSP) show a composition bias toward low complexity.

This sequence belongs to the nuclear hormone receptor family. NR3 subfamily. In terms of assembly, binds DNA as a homodimer. Can form a heterodimer with ER-beta.

It localises to the nucleus. Its function is as follows. The steroid hormones and their receptors are involved in the regulation of eukaryotic gene expression and affect cellular proliferation and differentiation in target tissues. The protein is Estrogen receptor (esr1) of Danio rerio (Zebrafish).